Consider the following 290-residue polypeptide: MSLVSYPRSESESDIEEETPLASKSFDPTLFQHARRKLSVDSTKKSPKRLKRQVDLQKSSFNDKTFNESDVISNERFKSNDLLELLPAPKNQAELAPKSSKRSDLDLNENYLLPNNSVSDLTSTGSSETVKKSTYSEKSGNVSLFNIVGSESKQASLVDSDQKPYQPILIKPKARANPPKLRNQPENDFISIANHSVHSNAEDINIINEDYIEIGRHRKEKGRIIDVDINKLPKPTQEALPSAPTIKSVAPGRHQLSSLVEMAISQKDNFEAYFEQQRSNKKASSQKYGF.

Disordered regions lie at residues 1-61 and 114-134; these read MSLV…KSSF and PNNS…KKST. Residues 114 to 128 are compositionally biased toward polar residues; the sequence is PNNSVSDLTSTGSSE.

Belongs to the 40S cdc5-associated complex (or cwf complex), a spliceosome sub-complex reminiscent of a late-stage spliceosome composed of the U2, U5 and U6 snRNAs and at least brr2, cdc5, cwf2/prp3, cwf3/syf1, cwf4/syf3, cwf5/ecm2, spp42/cwf6, cwf7/spf27, cwf8, cwf9, cwf10, cwf11, cwf12, prp45/cwf13, cwf14, cwf15, cwf16, cwf17, cwf18, cwf19, cwf20, cwf21, cwf22, cwf23, cwf24, cwf25, cwf26, cyp7/cwf27, cwf28, cwf29/ist3, lea1, msl1, prp5/cwf1, prp10, prp12/sap130, prp17, prp22, sap61, sap62, sap114, sap145, slu7, smb1, smd1, smd3, smf1, smg1 and syf2.

The protein localises to the nucleus. Functionally, involved in mRNA splicing where it associates with cdc5 and the other cwf proteins as part of the spliceosome. The protein is Pre-mRNA-splicing factor cwf20 (cwf20) of Schizosaccharomyces pombe (strain 972 / ATCC 24843) (Fission yeast).